The sequence spans 493 residues: Succinate-semialdehyde dehydrogenase [NADP(+)] 2 (493 aa).

242-247 (GSTNVG) provides a ligand contact to NAD(+). The active site involves Glu-264. The active-site Nucleophile is Cys-298.

The protein belongs to the aldehyde dehydrogenase family. In terms of assembly, homotetramer.

The protein resides in the cytoplasm. The enzyme catalyses succinate semialdehyde + NAD(+) + H2O = succinate + NADH + 2 H(+). It carries out the reaction succinate semialdehyde + NADP(+) + H2O = succinate + NADPH + 2 H(+). The protein operates within amino-acid degradation; 4-aminobutanoate degradation. Catalyzes the oxidation of succinate semialdehyde to succinate. Can utilize both NAD(+) or NADP(+) as a coenzyme. Functions in the GABA shunt, which allows to bypass 2 reactions in the TCA cycle by removing alpha-ketoglutarate from the cycle and feeding succinate and NADH back into the cycle. The protein is Succinate-semialdehyde dehydrogenase [NADP(+)] 2 (ssd2) of Schizosaccharomyces pombe (strain 972 / ATCC 24843) (Fission yeast).